Here is a 180-residue protein sequence, read N- to C-terminus: Signal peptidase complex subunit 2 (180 aa).

Residues 1–45 (MTDEPVKVVNKWDGPTVKNALDEVVKKILNDKVGWTESHNLMNLR) are Cytoplasmic-facing. The chain crosses the membrane as a helical span at residues 46–66 (LLISFIGVAFSAFACGYDYYE). Topologically, residues 67-72 (PFPKSK) are lumenal. A helical membrane pass occupies residues 73-93 (IVLAVCSVSYFICMGILQMYQ). Residues 94-180 (WYVEKDCIYE…LYNRLIRSEQ (87 aa)) are Cytoplasmic-facing.

Belongs to the SPCS2 family. Component of the signal peptidase complex (SPC) composed of a catalytic subunit sec-11 and three accessory subunits spcs-1, spcs-2 and spcs-3. The complex induces a local thinning of the ER membrane which is used to measure the length of the signal peptide (SP) h-region of protein substrates. This ensures the selectivity of the complex towards h-regions shorter than 18-20 amino acids.

Its subcellular location is the endoplasmic reticulum membrane. Functionally, component of the signal peptidase complex (SPC) which catalyzes the cleavage of N-terminal signal sequences from nascent proteins as they are translocated into the lumen of the endoplasmic reticulum. Enhances the enzymatic activity of SPC and facilitates the interactions between different components of the translocation site. This chain is Signal peptidase complex subunit 2, found in Caenorhabditis elegans.